A 317-amino-acid chain; its full sequence is Transaldolase A (317 aa).

Catalysis depends on Lys-132, which acts as the Schiff-base intermediate with substrate.

This sequence belongs to the transaldolase family. Type 1 subfamily. In terms of assembly, homodimer.

The protein resides in the cytoplasm. The catalysed reaction is D-sedoheptulose 7-phosphate + D-glyceraldehyde 3-phosphate = D-erythrose 4-phosphate + beta-D-fructose 6-phosphate. Its pathway is carbohydrate degradation; pentose phosphate pathway; D-glyceraldehyde 3-phosphate and beta-D-fructose 6-phosphate from D-ribose 5-phosphate and D-xylulose 5-phosphate (non-oxidative stage): step 2/3. Functionally, transaldolase is important for the balance of metabolites in the pentose-phosphate pathway. This Pasteurella multocida (strain Pm70) protein is Transaldolase A (talA).